The chain runs to 160 residues: Peripheral myelin protein 22 (160 aa).

Met-1 is a topological domain (cytoplasmic). Residues 2-31 (LLLLLSIIVLHVAVLVLLFVSTIVSQWIVG) traverse the membrane as a helical segment. Residues 32–64 (NGHATDLWQNCSTSSSGNVHHCFSSSPNEWLQS) lie on the Extracellular side of the membrane. N-linked (GlcNAc...) asparagine glycosylation occurs at Asn-41. Residues 65–91 (VQATMILSIIFSILSLFLFFCQLFTLT) form a helical membrane-spanning segment. Residues 92 to 95 (KGGR) are Cytoplasmic-facing. Residues 96 to 119 (FYITGIFQILAGLCVMSAAAIYTV) form a helical membrane-spanning segment. The Extracellular segment spans residues 120–133 (RHPEWHLNSDYSYG). The chain crosses the membrane as a helical span at residues 134–156 (FAYILAWVAFPLALLSGVIYVIL). At 157–160 (RKRE) the chain is on the cytoplasmic side.

This sequence belongs to the PMP-22/EMP/MP20 family. Post-translationally, ubiquitinated by the DCX(DCAF13) E3 ubiquitin ligase complex, leading to its degradation.

The protein localises to the cell membrane. In terms of biological role, might be involved in growth regulation, and in myelinization in the peripheral nervous system. This is Peripheral myelin protein 22 (PMP22) from Homo sapiens (Human).